The sequence spans 931 residues: MNTGDTPCKTSLRVTTWVDRSLHHLKLQTEFCMNMANRSHSQYHITPQDHDEDARGYLLNEPPAHGYDHDRLGVGTPPDRPVSAYSLTESYAPNASQLPPAGSGGFGDNGFGQYGQPQGFGGPYDRPLSAVHDEEESWMQRQQQPGGVGQAGGLRRYNTRKVKLVQGSVLSIDYPVPSAIKNAVQPRYRDVEGGNEEFMKMRYTAATCDPNDFTLKNGYDLRPRMYNRHTELLIAITYYNEDKVLLSRTLHGVMQNIRDIVNLKKSTFWNKGGPAWQKIVVCLVFDGIEKADKNTLDVLATVGVYQDGVIKKDVDGKETVAHIFEYTSQLSVTPSQQLIRPTGDSPQNLPPVQFIFCLKQKNSKKINSHRWLFNAFGRILNPEVTILIDAGTKPSPRSLLALWEGFYNDKDLGGACGEIHAMLGKGGKKLFNPLVAVQNFEYKISNILDKPLESSFGYVSVLPGAFSAYRFRAIMGRPLEQYFHGDHTLSKILGKKGIDGMNIFKKNMFLAEDRILCFELVAKAGQKWHLTYIKAAKGETDVPEGAAEFISQRRRWLNGSFAASLYSLMHFGRLYKSGHNIVRMFFLHIQVIYNVLNVIFSWFSLASYYLTTTVIMDLVGTPVVASSSAAEHHGWPFGDTATPIINALLKYLYLAFVILQFILALGNRPKGSKFTYIASFMVFGLIQGYILVLSGYLVARAFQQPISEQIKLDSSEDFVRSFFSGSSAGGVILIALITIYGLYFVASFLYLDPWHMFHSFPYYMLLMSTYINILMVYAFNNWHDVSWGTKGSDKAEALPSANVTKSEKNEVVVEEIEKEQEDIDSQFEQTVRRALAPFKEVEEIEKKDVEDSYKSFRTGLVVSWLFSNILLVVIITSDNFNSFGIGKSASVRTANFFKFLLYATAALSIVRFIGFLWFLGKTGLMCCFARR.

Residues asparagine 37 and asparagine 94 are each glycosylated (N-linked (GlcNAc...) asparagine). A disordered region spans residues 93 to 154; that stretch reads PNASQLPPAG…PGGVGQAGGL (62 aa). Over residues 102–122 the composition is skewed to gly residues; the sequence is GSGGFGDNGFGQYGQPQGFGG. Asparagine 558 carries an N-linked (GlcNAc...) asparagine glycan. The next 5 helical transmembrane spans lie at 585–605, 644–664, 677–697, 731–751, and 759–779; these read FFLH…WFSL, IINA…FILA, IASF…SGYL, VILI…FLYL, and SFPY…VYAF. Residue asparagine 802 is glycosylated (N-linked (GlcNAc...) asparagine). Helical transmembrane passes span 858-878 and 899-919; these read TGLV…ITSD and FLLY…LWFL.

Belongs to the chitin synthase family. Class III subfamily. In terms of tissue distribution, highly expressed in conidia and during appressorium formation.

The protein resides in the cell membrane. It catalyses the reaction [(1-&gt;4)-N-acetyl-beta-D-glucosaminyl](n) + UDP-N-acetyl-alpha-D-glucosamine = [(1-&gt;4)-N-acetyl-beta-D-glucosaminyl](n+1) + UDP + H(+). Its function is as follows. Polymerizes chitin, a structural polymer of the cell wall and septum, by transferring the sugar moiety of UDP-GlcNAc to the non-reducing end of the growing chitin polymer. Contributes to the production of conidia and the ability of fungal conidia to germinate. Involved in the fungal cell wall integrity and the ability of conidia to withstand biophysical pressure. Required for appressorium formation and evasion of insect cellular and/or humoral defenses, promoting the fungal dimorphic transition to the production of hyphal bodies that occurs within hosts, and ultimately to virulence. The chain is Chitin synthase III from Metarhizium acridum (strain CQMa 102).